The chain runs to 178 residues: ATP synthase subunit delta (178 aa).

This sequence belongs to the ATPase delta chain family. As to quaternary structure, F-type ATPases have 2 components, F(1) - the catalytic core - and F(0) - the membrane proton channel. F(1) has five subunits: alpha(3), beta(3), gamma(1), delta(1), epsilon(1). F(0) has three main subunits: a(1), b(2) and c(10-14). The alpha and beta chains form an alternating ring which encloses part of the gamma chain. F(1) is attached to F(0) by a central stalk formed by the gamma and epsilon chains, while a peripheral stalk is formed by the delta and b chains.

Its subcellular location is the cell inner membrane. Its function is as follows. F(1)F(0) ATP synthase produces ATP from ADP in the presence of a proton or sodium gradient. F-type ATPases consist of two structural domains, F(1) containing the extramembraneous catalytic core and F(0) containing the membrane proton channel, linked together by a central stalk and a peripheral stalk. During catalysis, ATP synthesis in the catalytic domain of F(1) is coupled via a rotary mechanism of the central stalk subunits to proton translocation. Functionally, this protein is part of the stalk that links CF(0) to CF(1). It either transmits conformational changes from CF(0) to CF(1) or is implicated in proton conduction. The chain is ATP synthase subunit delta from Pseudomonas entomophila (strain L48).